Reading from the N-terminus, the 51-residue chain is Large ribosomal subunit protein eL39 (51 aa).

The tract at residues 32-51 is disordered; it reads KGSVKQHPKMRHWRRKNLKK. The span at 33-51 shows a compositional bias: basic residues; sequence GSVKQHPKMRHWRRKNLKK.

This sequence belongs to the eukaryotic ribosomal protein eL39 family.

The chain is Large ribosomal subunit protein eL39 from Methanococcus maripaludis (strain C5 / ATCC BAA-1333).